A 435-amino-acid polypeptide reads, in one-letter code: Serine/threonine-protein kinase ssn3 (435 aa).

One can recognise a Protein kinase domain in the interval 49–377 (YRIVGFISSG…AREALEHPYF (329 aa)). ATP contacts are provided by residues 55–63 (ISSGTYGRV) and lysine 79. Aspartate 181 acts as the Proton acceptor in catalysis. Over residues 398 to 407 (RRVTQDDNDI) the composition is skewed to basic and acidic residues. The interval 398-435 (RRVTQDDNDIRSGSLPGTKRSGLPDDSLMGRASKRIKE) is disordered.

This sequence belongs to the protein kinase superfamily. CMGC Ser/Thr protein kinase family. CDC2/CDKX subfamily. Component of the srb8-11 complex, a regulatory module of the Mediator complex. Requires Mg(2+) as cofactor.

The protein localises to the nucleus. The enzyme catalyses L-seryl-[protein] + ATP = O-phospho-L-seryl-[protein] + ADP + H(+). The catalysed reaction is L-threonyl-[protein] + ATP = O-phospho-L-threonyl-[protein] + ADP + H(+). It catalyses the reaction [DNA-directed RNA polymerase] + ATP = phospho-[DNA-directed RNA polymerase] + ADP + H(+). Its function is as follows. Component of the srb8-11 complex. The srb8-11 complex is a regulatory module of the Mediator complex which is itself involved in regulation of basal and activated RNA polymerase II-dependent transcription. The srb8-11 complex may be involved in the transcriptional repression of a subset of genes regulated by Mediator. It may inhibit the association of the Mediator complex with RNA polymerase II to form the holoenzyme complex. The srb8-11 complex phosphorylates the C-terminal domain (CTD) of the largest subunit of RNA polymerase II. In Aspergillus terreus (strain NIH 2624 / FGSC A1156), this protein is Serine/threonine-protein kinase ssn3 (ssn3).